Consider the following 61-residue polypeptide: Neurotoxin-like protein 1 (61 aa).

4 disulfides stabilise this stretch: C3–C24, C17–C38, C42–C53, and C54–C59.

In terms of tissue distribution, expressed by the venom gland.

It localises to the secreted. The polypeptide is Neurotoxin-like protein 1 (Causus rhombeatus (Rhombic night adder)).